Here is a 418-residue protein sequence, read N- to C-terminus: Protein MAEA homolog (418 aa).

The 33-residue stretch at 141-173 folds into the LisH domain; the sequence is NNTKLKRILVDYMLRMSYFETATKLSESSNIMD. The CTLH domain maps to 179 to 236; it reads IFREAKKVIDALKNREVASALTWCADNKTRLKKSKSKFEFQLRLQEFIELVRVDTAES. The RING-Gid-type zinc-finger motif lies at 330 to 403; it reads CTKEDPLSQE…NGGKITCPRT (74 aa).

In terms of assembly, interacts with RANBPM.

It is found in the cytoplasm. In Arabidopsis thaliana (Mouse-ear cress), this protein is Protein MAEA homolog.